We begin with the raw amino-acid sequence, 236 residues long: 1-(5-phosphoribosyl)-5-[(5-phosphoribosylamino)methylideneamino] imidazole-4-carboxamide isomerase (236 aa).

The Proton acceptor role is filled by aspartate 8. Catalysis depends on aspartate 127, which acts as the Proton donor.

Belongs to the HisA/HisF family.

The protein resides in the cytoplasm. It catalyses the reaction 1-(5-phospho-beta-D-ribosyl)-5-[(5-phospho-beta-D-ribosylamino)methylideneamino]imidazole-4-carboxamide = 5-[(5-phospho-1-deoxy-D-ribulos-1-ylimino)methylamino]-1-(5-phospho-beta-D-ribosyl)imidazole-4-carboxamide. It participates in amino-acid biosynthesis; L-histidine biosynthesis; L-histidine from 5-phospho-alpha-D-ribose 1-diphosphate: step 4/9. This is 1-(5-phosphoribosyl)-5-[(5-phosphoribosylamino)methylideneamino] imidazole-4-carboxamide isomerase from Campylobacter hominis (strain ATCC BAA-381 / DSM 21671 / CCUG 45161 / LMG 19568 / NCTC 13146 / CH001A).